Consider the following 120-residue polypeptide: MALDTEKIIEDLKGASILELNDLVKAIEDEFGVSAAAPVAAAGAAGAGAEKTEFDVELTDVGQEKVKVIKVVRDITGLGLKDSKDLVDGAPKNVKEGVSEDEANDIKAKLEEVGATVTVK.

It belongs to the bacterial ribosomal protein bL12 family. As to quaternary structure, homodimer. Part of the ribosomal stalk of the 50S ribosomal subunit. Forms a multimeric L10(L12)X complex, where L10 forms an elongated spine to which 2 to 4 L12 dimers bind in a sequential fashion. Binds GTP-bound translation factors.

Forms part of the ribosomal stalk which helps the ribosome interact with GTP-bound translation factors. Is thus essential for accurate translation. In Lactobacillus gasseri (strain ATCC 33323 / DSM 20243 / BCRC 14619 / CIP 102991 / JCM 1131 / KCTC 3163 / NCIMB 11718 / NCTC 13722 / AM63), this protein is Large ribosomal subunit protein bL12.